The chain runs to 343 residues: Small ribosomal subunit biogenesis GTPase RsgA (343 aa).

The CP-type G domain occupies 116-275; it reads RGQLKPVAAN…LIDSPGIREF (160 aa). Residues 163-166 and 217-225 each bind GTP; these read NKAD and GQSGVGKSS. Cysteine 299, cysteine 304, histidine 306, and cysteine 312 together coordinate Zn(2+).

Belongs to the TRAFAC class YlqF/YawG GTPase family. RsgA subfamily. In terms of assembly, monomer. Associates with 30S ribosomal subunit, binds 16S rRNA. Requires Zn(2+) as cofactor.

The protein resides in the cytoplasm. In terms of biological role, one of several proteins that assist in the late maturation steps of the functional core of the 30S ribosomal subunit. Helps release RbfA from mature subunits. May play a role in the assembly of ribosomal proteins into the subunit. Circularly permuted GTPase that catalyzes slow GTP hydrolysis, GTPase activity is stimulated by the 30S ribosomal subunit. The polypeptide is Small ribosomal subunit biogenesis GTPase RsgA (Ectopseudomonas mendocina (strain ymp) (Pseudomonas mendocina)).